A 374-amino-acid polypeptide reads, in one-letter code: Methylthioribose-1-phosphate isomerase (374 aa).

Asp-256 acts as the Proton donor in catalysis.

Belongs to the eIF-2B alpha/beta/delta subunits family. MtnA subfamily.

It localises to the cytoplasm. Its subcellular location is the nucleus. It catalyses the reaction 5-(methylsulfanyl)-alpha-D-ribose 1-phosphate = 5-(methylsulfanyl)-D-ribulose 1-phosphate. The protein operates within amino-acid biosynthesis; L-methionine biosynthesis via salvage pathway; L-methionine from S-methyl-5-thio-alpha-D-ribose 1-phosphate: step 1/6. In terms of biological role, catalyzes the interconversion of methylthioribose-1-phosphate (MTR-1-P) into methylthioribulose-1-phosphate (MTRu-1-P). The polypeptide is Methylthioribose-1-phosphate isomerase (Leishmania braziliensis).